Reading from the N-terminus, the 289-residue chain is ATP synthase gamma chain (289 aa).

This sequence belongs to the ATPase gamma chain family. As to quaternary structure, F-type ATPases have 2 components, CF(1) - the catalytic core - and CF(0) - the membrane proton channel. CF(1) has five subunits: alpha(3), beta(3), gamma(1), delta(1), epsilon(1). CF(0) has three main subunits: a, b and c.

Its subcellular location is the cell inner membrane. Functionally, produces ATP from ADP in the presence of a proton gradient across the membrane. The gamma chain is believed to be important in regulating ATPase activity and the flow of protons through the CF(0) complex. This is ATP synthase gamma chain from Coxiella burnetii (strain CbuG_Q212) (Coxiella burnetii (strain Q212)).